The chain runs to 46 residues: Large ribosomal subunit protein bL34 (46 aa).

It belongs to the bacterial ribosomal protein bL34 family.

This chain is Large ribosomal subunit protein bL34, found in Trichodesmium erythraeum (strain IMS101).